The primary structure comprises 384 residues: Glutamate 5-kinase (384 aa).

An ATP-binding site is contributed by Lys24. Substrate-binding residues include Ser64, Asp149, and Asn161. Residues 181–182 (TD) and 223–229 (TGGMRTK) contribute to the ATP site. The PUA domain occupies 288-370 (PGAILIDAGA…RDIQTLLGYT (83 aa)).

This sequence belongs to the glutamate 5-kinase family.

It is found in the cytoplasm. The enzyme catalyses L-glutamate + ATP = L-glutamyl 5-phosphate + ADP. It functions in the pathway amino-acid biosynthesis; L-proline biosynthesis; L-glutamate 5-semialdehyde from L-glutamate: step 1/2. In terms of biological role, catalyzes the transfer of a phosphate group to glutamate to form L-glutamate 5-phosphate. The protein is Glutamate 5-kinase of Xylella fastidiosa (strain M12).